We begin with the raw amino-acid sequence, 134 residues long: Ribosome-binding factor A (134 aa).

This sequence belongs to the RbfA family. Monomer. Binds 30S ribosomal subunits, but not 50S ribosomal subunits or 70S ribosomes.

It is found in the cytoplasm. One of several proteins that assist in the late maturation steps of the functional core of the 30S ribosomal subunit. Associates with free 30S ribosomal subunits (but not with 30S subunits that are part of 70S ribosomes or polysomes). Required for efficient processing of 16S rRNA. May interact with the 5'-terminal helix region of 16S rRNA. This chain is Ribosome-binding factor A, found in Baumannia cicadellinicola subsp. Homalodisca coagulata.